The primary structure comprises 115 residues: NADH-ubiquinone oxidoreductase chain 3 (115 aa).

Transmembrane regions (helical) follow at residues L4–L24, F55–L75, and M87–M107.

The protein belongs to the complex I subunit 3 family. In terms of assembly, core subunit of respiratory chain NADH dehydrogenase (Complex I) which is composed of 45 different subunits. Interacts with TMEM186. Interacts with TMEM242.

It localises to the mitochondrion inner membrane. The enzyme catalyses a ubiquinone + NADH + 5 H(+)(in) = a ubiquinol + NAD(+) + 4 H(+)(out). Functionally, core subunit of the mitochondrial membrane respiratory chain NADH dehydrogenase (Complex I) which catalyzes electron transfer from NADH through the respiratory chain, using ubiquinone as an electron acceptor. Essential for the catalytic activity of complex I. This chain is NADH-ubiquinone oxidoreductase chain 3, found in Habromys lophurus (Crested-tailed deer mouse).